The primary structure comprises 274 residues: Large ribosomal subunit protein uL2 (274 aa).

Residues 224–274 (VAMNPVDHPHGGGEGRTSGGRHPVTPWGIPTKGYKTRRNKRSNKLIVQKRK) form a disordered region. Residues 257 to 274 (YKTRRNKRSNKLIVQKRK) are compositionally biased toward basic residues.

This sequence belongs to the universal ribosomal protein uL2 family. As to quaternary structure, part of the 50S ribosomal subunit. Forms a bridge to the 30S subunit in the 70S ribosome.

Functionally, one of the primary rRNA binding proteins. Required for association of the 30S and 50S subunits to form the 70S ribosome, for tRNA binding and peptide bond formation. It has been suggested to have peptidyltransferase activity; this is somewhat controversial. Makes several contacts with the 16S rRNA in the 70S ribosome. In Francisella tularensis subsp. mediasiatica (strain FSC147), this protein is Large ribosomal subunit protein uL2.